The primary structure comprises 273 residues: 4-hydroxy-tetrahydrodipicolinate reductase (273 aa).

NAD(+) is bound by residues 12–17 (GAGGRM) and Glu-38. Arg-39 lines the NADP(+) pocket. NAD(+) contacts are provided by residues 102-104 (GTT) and 126-129 (AANF). Residue His-159 is the Proton donor/acceptor of the active site. His-160 lines the (S)-2,3,4,5-tetrahydrodipicolinate pocket. Catalysis depends on Lys-163, which acts as the Proton donor. 169–170 (GT) provides a ligand contact to (S)-2,3,4,5-tetrahydrodipicolinate.

Belongs to the DapB family. As to quaternary structure, homotetramer.

It is found in the cytoplasm. The enzyme catalyses (S)-2,3,4,5-tetrahydrodipicolinate + NAD(+) + H2O = (2S,4S)-4-hydroxy-2,3,4,5-tetrahydrodipicolinate + NADH + H(+). It carries out the reaction (S)-2,3,4,5-tetrahydrodipicolinate + NADP(+) + H2O = (2S,4S)-4-hydroxy-2,3,4,5-tetrahydrodipicolinate + NADPH + H(+). It participates in amino-acid biosynthesis; L-lysine biosynthesis via DAP pathway; (S)-tetrahydrodipicolinate from L-aspartate: step 4/4. Its function is as follows. Catalyzes the conversion of 4-hydroxy-tetrahydrodipicolinate (HTPA) to tetrahydrodipicolinate. In Escherichia fergusonii (strain ATCC 35469 / DSM 13698 / CCUG 18766 / IAM 14443 / JCM 21226 / LMG 7866 / NBRC 102419 / NCTC 12128 / CDC 0568-73), this protein is 4-hydroxy-tetrahydrodipicolinate reductase.